Reading from the N-terminus, the 433-residue chain is Phosphoribosylamine--glycine ligase (433 aa).

In terms of domain architecture, ATP-grasp spans glutamate 111 to aspartate 317. Glutamate 138–threonine 194 serves as a coordination point for ATP. The Mg(2+) site is built by glutamine 275, glutamate 287, and asparagine 289. Residues glutamine 275, glutamate 287, and asparagine 289 each contribute to the Mn(2+) site.

This sequence belongs to the GARS family. It depends on Mg(2+) as a cofactor. Mn(2+) serves as cofactor.

The catalysed reaction is 5-phospho-beta-D-ribosylamine + glycine + ATP = N(1)-(5-phospho-beta-D-ribosyl)glycinamide + ADP + phosphate + H(+). It participates in purine metabolism; IMP biosynthesis via de novo pathway; N(1)-(5-phospho-D-ribosyl)glycinamide from 5-phospho-alpha-D-ribose 1-diphosphate: step 2/2. The chain is Phosphoribosylamine--glycine ligase from Methanocella arvoryzae (strain DSM 22066 / NBRC 105507 / MRE50).